The following is a 487-amino-acid chain: Protein translocase subunit SecY (487 aa).

Residues 1–20 are Cytoplasmic-facing; the sequence is MSWKDTAEPLLVRMPAVQRP. A helical membrane pass occupies residues 21–47; it reads EGHVPFKRKLTWTGGVLLLYFFLTNVK. Over 48-59 the chain is Extracellular; sequence LFGLDIDASQQV. An intramembrane region (helical) is located at residues 60–67; the sequence is FGRFSSIL. Residues 60 to 88 traverse the membrane as a discontinuously helical segment; it reads FGRFSSILASGQGSIMQLGIGPIVTASIV. Residues 68 to 79 lie within the membrane without spanning it; that stretch reads ASGQGSIMQLGI. An intramembrane region (helical) is located at residues 80-88; it reads GPIVTASIV. Topologically, residues 89–110 are cytoplasmic; sequence LQLLGGADLLGLNTQDDPRDQI. Residues 111 to 135 traverse the membrane as a helical segment; sequence LYQGLQKLLVLVMICLTGLPMVFAG. At 136-153 the chain is on the extracellular side; the sequence is GFLPADTAVANSLGIGTA. The helical transmembrane segment at 154-178 threads the bilayer; it reads GVQWLIFAQMFVGGVLILFMDEVIS. The Cytoplasmic portion of the chain corresponds to 179–184; it reads KWGVGS. The helical transmembrane segment at 185-203 threads the bilayer; sequence GIGLFIVAGVSQRLVGGLL. Residues 204–244 lie on the Extracellular side of the membrane; that stretch reads TAPFLGNSEGIIYTWYLFITGERGTGPVLAADGLQTVLLQG. Residues 245-266 traverse the membrane as a helical segment; the sequence is ELLGLFTTVLIFAVVVYAESVR. The Cytoplasmic portion of the chain corresponds to 267-291; the sequence is VEIPLSNARVKGARGRFPVKLIYAS. Residues 292–313 traverse the membrane as a helical segment; the sequence is VLPMILVRALQANIQFLGRILN. Over 314-364 the chain is Extracellular; the sequence is AQLGSMPAFLGTYANGQPTGGLFYFLAPIQSRGDWMWWLEGTAQPVWQILT. A helical membrane pass occupies residues 365–384; the sequence is RVGIDLFVMLVGGAVFAVFW. The Cytoplasmic segment spans residues 385–427; the sequence is VETTDMGPEATAKQIHNSGMQIPGFRQNVGVIEKVLERYIPQV. A helical membrane pass occupies residues 428–446; that stretch reads TVIGGALVGLLAVMANMLG. The Extracellular segment spans residues 447-451; the sequence is TIGGV. A helical transmembrane segment spans residues 452 to 466; it reads SGTGLLLTVSITYKL. The Cytoplasmic portion of the chain corresponds to 467–487; sequence YEEIAEEQLMEMHPMMRQMFG.

It belongs to the SecY/SEC61-alpha family. Component of the Sec protein translocase complex. Heterotrimer consisting of alpha (SecY), beta (SecG) and gamma (SecE) subunits. The heterotrimers can form oligomers, although 1 heterotrimer is thought to be able to translocate proteins. Interacts with the ribosome. May interact with SecDF, and other proteins may be involved.

The protein localises to the cell membrane. Its function is as follows. The central subunit of the protein translocation channel SecYEG. Consists of two halves formed by TMs 1-5 and 6-10. These two domains form a lateral gate at the front which open onto the bilayer between TMs 2 and 7, and are clamped together by SecE at the back. The channel is closed by both a pore ring composed of hydrophobic SecY resides and a short helix (helix 2A) on the extracellular side of the membrane which forms a plug. The plug probably moves laterally to allow the channel to open. The ring and the pore may move independently. This chain is Protein translocase subunit SecY, found in Haloarcula marismortui (strain ATCC 43049 / DSM 3752 / JCM 8966 / VKM B-1809) (Halobacterium marismortui).